A 788-amino-acid chain; its full sequence is Protocadherin beta-18 (788 aa).

The N-terminal stretch at 1–28 (MEPGKGRAQPTRQVLLFFVFLGGSLVYS) is a signal peptide. Cadherin domains are found at residues 29–133 (ETWS…TPTF), 134–242 (LNNH…APEF), 243–347 (EKPV…PPEI), 348–452 (AMTS…APAF), and 453–562 (TQTS…SPFV). The Extracellular portion of the chain corresponds to 29-691 (ETWSYSIAEE…AQADSLTVYL (663 aa)). A glycan (N-linked (GlcNAc...) asparagine) is linked at asparagine 169. Asparagine 419 and asparagine 437 each carry an N-linked (GlcNAc...) asparagine glycan. N-linked (GlcNAc...) asparagine glycosylation occurs at asparagine 568. One can recognise a Cadherin 6 domain in the interval 569–672 (GSAPCTELVP…LVDGFSQPYL (104 aa)). A helical membrane pass occupies residues 692 to 712 (VVALASVSSLFLFSVFLFVAV). At 713-788 (RLCRRSRAAS…DSDMEKAPPF (76 aa)) the chain is on the cytoplasmic side.

The protein localises to the cell membrane. Its function is as follows. Potential calcium-dependent cell-adhesion protein. This chain is Protocadherin beta-18 (PCDHB18), found in Pan troglodytes (Chimpanzee).